A 542-amino-acid chain; its full sequence is CTP synthase (542 aa).

The segment at 1–265 (MTRYIFVTGG…DDFVVERFGL (265 aa)) is amidoligase domain. Residue serine 13 coordinates CTP. Serine 13 is a binding site for UTP. ATP-binding positions include 14–19 (SLGKGI) and aspartate 71. The Mg(2+) site is built by aspartate 71 and glutamate 139. CTP-binding positions include 146–148 (DIE), 186–191 (KTKPTQ), and lysine 222. UTP-binding positions include 186–191 (KTKPTQ) and lysine 222. A Glutamine amidotransferase type-1 domain is found at 290 to 541 (TIAMVGKYME…VKAALAQKNK (252 aa)). An L-glutamine-binding site is contributed by glycine 351. Cysteine 378 serves as the catalytic Nucleophile; for glutamine hydrolysis. L-glutamine is bound by residues 379–382 (LGMQ), glutamate 402, and arginine 469. Catalysis depends on residues histidine 514 and glutamate 516.

It belongs to the CTP synthase family. As to quaternary structure, homotetramer.

It catalyses the reaction UTP + L-glutamine + ATP + H2O = CTP + L-glutamate + ADP + phosphate + 2 H(+). The catalysed reaction is L-glutamine + H2O = L-glutamate + NH4(+). It carries out the reaction UTP + NH4(+) + ATP = CTP + ADP + phosphate + 2 H(+). Its pathway is pyrimidine metabolism; CTP biosynthesis via de novo pathway; CTP from UDP: step 2/2. Its activity is regulated as follows. Allosterically activated by GTP, when glutamine is the substrate; GTP has no effect on the reaction when ammonia is the substrate. The allosteric effector GTP functions by stabilizing the protein conformation that binds the tetrahedral intermediate(s) formed during glutamine hydrolysis. Inhibited by the product CTP, via allosteric rather than competitive inhibition. Functionally, catalyzes the ATP-dependent amination of UTP to CTP with either L-glutamine or ammonia as the source of nitrogen. Regulates intracellular CTP levels through interactions with the four ribonucleotide triphosphates. The sequence is that of CTP synthase from Pseudomonas putida (strain GB-1).